The sequence spans 439 residues: tRNA modification GTPase MnmE (439 aa).

(6S)-5-formyl-5,6,7,8-tetrahydrofolate contacts are provided by R23, E80, and K120. The TrmE-type G domain occupies 217-365 (GLKIVIAGEP…LLTALQSHLP (149 aa)). N227 contributes to the K(+) binding site. GTP contacts are provided by residues 227–232 (NAGKSS), 246–252 (TEVAGTT), and 271–274 (DTAG). Position 231 (S231) interacts with Mg(2+). Residues T246, V248, and T251 each contribute to the K(+) site. T252 is a binding site for Mg(2+). K439 contacts (6S)-5-formyl-5,6,7,8-tetrahydrofolate.

This sequence belongs to the TRAFAC class TrmE-Era-EngA-EngB-Septin-like GTPase superfamily. TrmE GTPase family. As to quaternary structure, homodimer. Heterotetramer of two MnmE and two MnmG subunits. The cofactor is K(+).

It localises to the cytoplasm. Its function is as follows. Exhibits a very high intrinsic GTPase hydrolysis rate. Involved in the addition of a carboxymethylaminomethyl (cmnm) group at the wobble position (U34) of certain tRNAs, forming tRNA-cmnm(5)s(2)U34. The chain is tRNA modification GTPase MnmE from Rhizobium meliloti (strain 1021) (Ensifer meliloti).